The following is a 321-amino-acid chain: Nitrilase blr3397 (321 aa).

The CN hydrolase domain maps to 10–277 (YKAAVVQAAS…ETILYADIAL (268 aa)). Residue E50 is the Proton acceptor of the active site. K137 acts as the Proton donor in catalysis. Residue C171 is the Nucleophile of the active site.

The protein belongs to the carbon-nitrogen hydrolase superfamily. Nitrilase family. As to quaternary structure, homodecamer.

The catalysed reaction is an aliphatic nitrile + 2 H2O = a carboxylate + NH4(+). Functionally, nitrilase that acts on various kinds of nitrile compounds such as aliphatic and aromatic nitriles. Has higher activity toward aliphatic nitriles compared to aromatic nitriles. Among the different substrates tested, has the highest activity toward hydrocinnamonitrile. This is Nitrilase blr3397 from Bradyrhizobium diazoefficiens (strain JCM 10833 / BCRC 13528 / IAM 13628 / NBRC 14792 / USDA 110).